The primary structure comprises 410 residues: 2-oxoglutarate-dependent dioxygenase AOP3 (410 aa).

The Fe2OG dioxygenase domain maps to 258–355 (GNASVGAKEA…RYAAALFSYP (98 aa)). Histidine 278, aspartate 280, and histidine 335 together coordinate Fe cation. Arginine 346 lines the 2-oxoglutarate pocket.

It belongs to the iron/ascorbate-dependent oxidoreductase family. Fe(2+) serves as cofactor.

Its function is as follows. 2-oxoglutarate-dependent dioxygenase involved in glucosinolates biosynthesis. Catalyzes the conversion of methylsulfinylalkyl glucosinolates to hydroxyalkyl glucosinolates. This chain is 2-oxoglutarate-dependent dioxygenase AOP3 (AOP3), found in Arabidopsis thaliana (Mouse-ear cress).